Here is a 307-residue protein sequence, read N- to C-terminus: Putative ankyrin repeat protein R229 (307 aa).

ANK repeat units lie at residues 135–164 (ASRV…DINV), 165–194 (DNDK…NVHA), 196–224 (DDEA…NVNA), 226–254 (NDYA…NPMA), 256–284 (RYYP…SMVY), and 286–307 (SYAM…LLLD).

This chain is Putative ankyrin repeat protein R229, found in Acanthamoeba polyphaga (Amoeba).